The primary structure comprises 250 residues: 1-(5-phosphoribosyl)-5-[(5-phosphoribosylamino)methylideneamino] imidazole-4-carboxamide isomerase (250 aa).

Catalysis depends on D8, which acts as the Proton acceptor. D131 functions as the Proton donor in the catalytic mechanism.

The protein belongs to the HisA/HisF family.

It localises to the cytoplasm. It catalyses the reaction 1-(5-phospho-beta-D-ribosyl)-5-[(5-phospho-beta-D-ribosylamino)methylideneamino]imidazole-4-carboxamide = 5-[(5-phospho-1-deoxy-D-ribulos-1-ylimino)methylamino]-1-(5-phospho-beta-D-ribosyl)imidazole-4-carboxamide. It functions in the pathway amino-acid biosynthesis; L-histidine biosynthesis; L-histidine from 5-phospho-alpha-D-ribose 1-diphosphate: step 4/9. The protein is 1-(5-phosphoribosyl)-5-[(5-phosphoribosylamino)methylideneamino] imidazole-4-carboxamide isomerase of Paraburkholderia xenovorans (strain LB400).